The following is a 215-amino-acid chain: Ribosome maturation factor RimP (215 aa).

The tract at residues 180–215 (KDNRARKEAKKRRGEPDDDVPEGAEADATEEHEQES) is disordered. Over residues 195-207 (PDDDVPEGAEADA) the composition is skewed to acidic residues.

It belongs to the RimP family.

The protein resides in the cytoplasm. Its function is as follows. Required for maturation of 30S ribosomal subunits. This Mesorhizobium japonicum (strain LMG 29417 / CECT 9101 / MAFF 303099) (Mesorhizobium loti (strain MAFF 303099)) protein is Ribosome maturation factor RimP.